The sequence spans 179 residues: Large ribosomal subunit protein uL6 (179 aa).

It belongs to the universal ribosomal protein uL6 family. Part of the 50S ribosomal subunit.

This protein binds to the 23S rRNA, and is important in its secondary structure. It is located near the subunit interface in the base of the L7/L12 stalk, and near the tRNA binding site of the peptidyltransferase center. This is Large ribosomal subunit protein uL6 from Acidobacterium capsulatum (strain ATCC 51196 / DSM 11244 / BCRC 80197 / JCM 7670 / NBRC 15755 / NCIMB 13165 / 161).